The sequence spans 696 residues: Elongation factor G (696 aa).

Residues 8–290 (ERYRNIGVMA…AVLDYLPSPA (283 aa)) enclose the tr-type G domain. Residues 17–24 (AHIDAGKT), 88–92 (DTPGH), and 142–145 (NKMD) contribute to the GTP site.

Belongs to the TRAFAC class translation factor GTPase superfamily. Classic translation factor GTPase family. EF-G/EF-2 subfamily.

Its subcellular location is the cytoplasm. Its function is as follows. Catalyzes the GTP-dependent ribosomal translocation step during translation elongation. During this step, the ribosome changes from the pre-translocational (PRE) to the post-translocational (POST) state as the newly formed A-site-bound peptidyl-tRNA and P-site-bound deacylated tRNA move to the P and E sites, respectively. Catalyzes the coordinated movement of the two tRNA molecules, the mRNA and conformational changes in the ribosome. The chain is Elongation factor G from Nitrosospira multiformis (strain ATCC 25196 / NCIMB 11849 / C 71).